The following is a 357-amino-acid chain: tRNA N6-adenosine threonylcarbamoyltransferase (357 aa).

Fe cation is bound by residues His115 and His119. Residues 137-141 (LASGG), Asp170, Gly183, and Asn281 each bind substrate. Residue Asp309 coordinates Fe cation.

This sequence belongs to the KAE1 / TsaD family. Requires Fe(2+) as cofactor.

Its subcellular location is the cytoplasm. The enzyme catalyses L-threonylcarbamoyladenylate + adenosine(37) in tRNA = N(6)-L-threonylcarbamoyladenosine(37) in tRNA + AMP + H(+). Its function is as follows. Required for the formation of a threonylcarbamoyl group on adenosine at position 37 (t(6)A37) in tRNAs that read codons beginning with adenine. Is involved in the transfer of the threonylcarbamoyl moiety of threonylcarbamoyl-AMP (TC-AMP) to the N6 group of A37, together with TsaE and TsaB. TsaD likely plays a direct catalytic role in this reaction. This is tRNA N6-adenosine threonylcarbamoyltransferase from Nitrobacter hamburgensis (strain DSM 10229 / NCIMB 13809 / X14).